We begin with the raw amino-acid sequence, 198 residues long: Recombination protein RecR (198 aa).

The C4-type zinc finger occupies 57–72 (CSLCGNLDTVDPCHIC). Residues 80–175 (GLICVVETVG…TVTRVGHGVP (96 aa)) form the Toprim domain.

The protein belongs to the RecR family.

Functionally, may play a role in DNA repair. It seems to be involved in an RecBC-independent recombinational process of DNA repair. It may act with RecF and RecO. This Gluconobacter oxydans (strain 621H) (Gluconobacter suboxydans) protein is Recombination protein RecR.